Here is a 395-residue protein sequence, read N- to C-terminus: S-adenosylmethionine synthase (395 aa).

An ATP-binding site is contributed by H16. Position 18 (D18) interacts with Mg(2+). E44 contacts K(+). Residues E57 and Q100 each contribute to the L-methionine site. The tract at residues 100 to 110 is flexible loop; that stretch reads QSPDIAQGVDR. ATP-binding positions include 167–169, 233–234, D242, 248–249, A265, and K269; these read DAK, RF, and RK. D242 contributes to the L-methionine binding site. K273 contributes to the L-methionine binding site.

Belongs to the AdoMet synthase family. In terms of assembly, homotetramer; dimer of dimers. The cofactor is Mg(2+). K(+) is required as a cofactor.

It localises to the cytoplasm. It catalyses the reaction L-methionine + ATP + H2O = S-adenosyl-L-methionine + phosphate + diphosphate. The protein operates within amino-acid biosynthesis; S-adenosyl-L-methionine biosynthesis; S-adenosyl-L-methionine from L-methionine: step 1/1. Functionally, catalyzes the formation of S-adenosylmethionine (AdoMet) from methionine and ATP. The overall synthetic reaction is composed of two sequential steps, AdoMet formation and the subsequent tripolyphosphate hydrolysis which occurs prior to release of AdoMet from the enzyme. The protein is S-adenosylmethionine synthase of Paraburkholderia phymatum (strain DSM 17167 / CIP 108236 / LMG 21445 / STM815) (Burkholderia phymatum).